A 291-amino-acid polypeptide reads, in one-letter code: Pyridoxal 5'-phosphate synthase subunit PdxS (291 aa).

Aspartate 23 is a binding site for D-ribose 5-phosphate. Catalysis depends on lysine 80, which acts as the Schiff-base intermediate with D-ribose 5-phosphate. Glycine 152 is a binding site for D-ribose 5-phosphate. Position 164 (arginine 164) interacts with D-glyceraldehyde 3-phosphate. Residues glycine 213 and 234–235 (GS) each bind D-ribose 5-phosphate.

This sequence belongs to the PdxS/SNZ family. In terms of assembly, in the presence of PdxT, forms a dodecamer of heterodimers.

The enzyme catalyses aldehydo-D-ribose 5-phosphate + D-glyceraldehyde 3-phosphate + L-glutamine = pyridoxal 5'-phosphate + L-glutamate + phosphate + 3 H2O + H(+). Its pathway is cofactor biosynthesis; pyridoxal 5'-phosphate biosynthesis. Functionally, catalyzes the formation of pyridoxal 5'-phosphate from ribose 5-phosphate (RBP), glyceraldehyde 3-phosphate (G3P) and ammonia. The ammonia is provided by the PdxT subunit. Can also use ribulose 5-phosphate and dihydroxyacetone phosphate as substrates, resulting from enzyme-catalyzed isomerization of RBP and G3P, respectively. The polypeptide is Pyridoxal 5'-phosphate synthase subunit PdxS (Desulfitobacterium hafniense (strain DSM 10664 / DCB-2)).